A 581-amino-acid chain; its full sequence is Invertase (581 aa).

Residues 1–22 form the signal peptide; that stretch reads MFLKYILASGICLVSLLSSTNA. N-linked (GlcNAc...) asparagine glycosylation is found at Asn-37, Asn-40, Asn-46, Asn-57, Asn-62, and Asn-79. Substrate is bound by residues 94–97, Gln-113, and 158–159; these read FMND and FS. Asp-97 is a catalytic residue. 2 N-linked (GlcNAc...) asparagine glycosylation sites follow: Asn-168 and Asn-175. Residues 227–228 and Glu-280 each bind substrate; that span reads RD. Asn-322 carries N-linked (GlcNAc...) asparagine glycosylation. Position 366 (Trp-366) interacts with substrate. N-linked (GlcNAc...) asparagine glycans are attached at residues Asn-399, Asn-409, Asn-425, Asn-446, Asn-452, Asn-519, and Asn-569.

Belongs to the glycosyl hydrolase 32 family. Post-translationally, glycosylated; contains 67% carbohydrates. This is composed of equimolar amounts of mannose and galactose. There is also a small amount of glucosamine present.

It carries out the reaction Hydrolysis of terminal non-reducing beta-D-fructofuranoside residues in beta-D-fructofuranosides.. This chain is Invertase (inv1), found in Schizosaccharomyces pombe (strain 972 / ATCC 24843) (Fission yeast).